The sequence spans 245 residues: MTRMSISVKNLKEIVDMLGTIVSEVKFKLEPNGISVTAVDPAHVAMISLDIPKNAFSEYDLDAPDEIAVDLDKVKSVIRLASSNDTIVISKDRDKLRFEIGTIIKSIALLDNNSVTTPRVPQINSDDYVILSKSDLEKGLRAAEDVSDAIRLTLTPESFSAKSTSDSDESEMLLPKDMLKDISCSQPIKSSYPLEYLLKLVKSISSNEDIKISFKSDYPLSIEFSFNSETEPISGKFLLAPRMES.

Belongs to the PCNA family. Homotrimer. The subunits circularize to form a toroid; DNA passes through its center. Replication factor C (RFC) is required to load the toroid on the DNA.

Its function is as follows. Sliding clamp subunit that acts as a moving platform for DNA processing. Responsible for tethering the catalytic subunit of DNA polymerase and other proteins to DNA during high-speed replication. The protein is DNA polymerase sliding clamp of Picrophilus torridus (strain ATCC 700027 / DSM 9790 / JCM 10055 / NBRC 100828 / KAW 2/3).